A 184-amino-acid chain; its full sequence is Large ribosomal subunit protein uL5 (184 aa).

Belongs to the universal ribosomal protein uL5 family. Part of the 50S ribosomal subunit; part of the 5S rRNA/L5/L18/L25 subcomplex. Contacts the 5S rRNA and the P site tRNA. Forms a bridge to the 30S subunit in the 70S ribosome.

This is one of the proteins that bind and probably mediate the attachment of the 5S RNA into the large ribosomal subunit, where it forms part of the central protuberance. In the 70S ribosome it contacts protein S13 of the 30S subunit (bridge B1b), connecting the 2 subunits; this bridge is implicated in subunit movement. Contacts the P site tRNA; the 5S rRNA and some of its associated proteins might help stabilize positioning of ribosome-bound tRNAs. The sequence is that of Large ribosomal subunit protein uL5 from Ureaplasma urealyticum serovar 10 (strain ATCC 33699 / Western).